The chain runs to 213 residues: Protein Nef (213 aa).

Residue Gly2 is the site of N-myristoyl glycine; by host attachment. The acidic; interacts with host PACS1 and PACS2; stabilizes the interaction of NEF/MHC-I with host AP1M1; necessary for MHC-I internalization stretch occupies residues 68–71 (QEEE). The SH3-binding; interaction with Src family tyrosine kinases stretch occupies residues 75–84 (PVAPQVPLRP). A PxxP; stabilizes the interaction of NEF/MHC-I with host AP1M1; necessary for MHC-I internalization motif is present at residues 78–81 (PQVP). The tract at residues 114–130 (EILDLWVYNTQGFFPDW) is mediates dimerization, Nef-PTE1 interaction. Residues 154 to 187 (VSEEEAERLGNTCERANLLHPACAHGFEDTHKEI) form a binding to ATP6V1H region. The Dileucine internalization motif; necessary for CD4 internalization signature appears at 171–172 (LL). A Diacidic; necessary for CD4 internalization motif is present at residues 181 to 182 (ED).

The protein belongs to the lentivirus primate group Nef protein family. As to quaternary structure, monomer; cytosolic form. Homodimer; membrane bound form. Interacts with Nef associated p21-activated kinase (PAK2); this interaction activates PAK2. Associates with the Nef-MHC-I-AP1 complex; this complex is required for MHC-I internalization. Interacts (via C-terminus) with host PI3-kinase. Interacts with host PACS1; this interaction seems to be weak. Interacts with host PACS2. Interacts with host LCK and MAPK3; these interactions inhibit the kinase activity of the latter. Interacts with host ATP6V1H; this interaction may play a role in CD4 endocytosis. Associates with the CD4-Nef-AP2 complex; this complex is required for CD4 internalization. Interacts with host AP2 subunit alpha and AP2 subunit sigma2. Interacts with TCR-zeta chain; this interaction up-regulates the Fas ligand (FasL) surface expression. Interacts with host HCK, LYN, and SRC; these interactions activate the Src family kinases. Interacts with MAP3K5; this interaction inhibits the Fas and TNFR-mediated death signals. Interacts with beta-COP and PTE1. Interacts with human RACK1; this increases Nef phosphorylation by PKC. Interacts with TP53; this interaction decreases the half-life of TP53, protecting the infected cell against p53-mediated apoptosis. In terms of processing, the virion-associated Nef proteins are cleaved by the viral protease to release the soluble C-terminal core protein. Nef is probably cleaved concomitantly with viral structural proteins on maturation of virus particles. Myristoylated. Post-translationally, phosphorylated on serine residues, probably by host PKCdelta and theta.

The protein resides in the host cell membrane. Its subcellular location is the virion. It is found in the secreted. The protein localises to the host Golgi apparatus membrane. Factor of infectivity and pathogenicity, required for optimal virus replication. Alters numerous pathways of T-lymphocyte function and down-regulates immunity surface molecules in order to evade host defense and increase viral infectivity. Alters the functionality of other immunity cells, like dendritic cells, monocytes/macrophages and NK cells. In terms of biological role, in infected CD4(+) T-lymphocytes, down-regulates the surface MHC-I, mature MHC-II, CD4, CD28, CCR5 and CXCR4 molecules. Mediates internalization and degradation of host CD4 through the interaction of with the cytoplasmic tail of CD4, the recruitment of AP-2 (clathrin adapter protein complex 2), internalization through clathrin coated pits, and subsequent transport to endosomes and lysosomes for degradation. Diverts host MHC-I molecules to the trans-Golgi network-associated endosomal compartments by an endocytic pathway to finally target them for degradation. MHC-I down-regulation may involve AP-1 (clathrin adapter protein complex 1) or possibly Src family kinase-ZAP70/Syk-PI3K cascade recruited by PACS2. In consequence infected cells are masked for immune recognition by cytotoxic T-lymphocytes. Decreasing the number of immune receptors also prevents reinfection by more HIV particles (superinfection). Down-regulates host SERINC3 and SERINC5 thereby excluding these proteins from the viral particles. Virion infectivity is drastically higher when SERINC3 or SERINC5 are excluded from the viral envelope, because these host antiviral proteins impair the membrane fusion event necessary for subsequent virion penetration. Functionally, bypasses host T-cell signaling by inducing a transcriptional program nearly identical to that of anti-CD3 cell activation. Interaction with TCR-zeta chain up-regulates the Fas ligand (FasL). Increasing surface FasL molecules and decreasing surface MHC-I molecules on infected CD4(+) cells send attacking cytotoxic CD8+ T-lymphocytes into apoptosis. Its function is as follows. Plays a role in optimizing the host cell environment for viral replication without causing cell death by apoptosis. Protects the infected cells from apoptosis in order to keep them alive until the next virus generation is ready to strike. Inhibits the Fas and TNFR-mediated death signals by blocking MAP3K5/ASK1. Decreases the half-life of TP53, protecting the infected cell against p53-mediated apoptosis. Inhibits the apoptotic signals regulated by the Bcl-2 family proteins through the formation of a Nef/PI3-kinase/PAK2 complex that leads to activation of PAK2 and induces phosphorylation of host BAD. Extracellular Nef protein targets CD4(+) T-lymphocytes for apoptosis by interacting with CXCR4 surface receptors. In Human immunodeficiency virus type 1 group O (isolate ANT70) (HIV-1), this protein is Protein Nef.